Consider the following 280-residue polypeptide: 2-dehydro-3-deoxyphosphooctonate aldolase 2 (280 aa).

This sequence belongs to the KdsA family.

Its subcellular location is the cytoplasm. It catalyses the reaction D-arabinose 5-phosphate + phosphoenolpyruvate + H2O = 3-deoxy-alpha-D-manno-2-octulosonate-8-phosphate + phosphate. The protein operates within carbohydrate biosynthesis; 3-deoxy-D-manno-octulosonate biosynthesis; 3-deoxy-D-manno-octulosonate from D-ribulose 5-phosphate: step 2/3. It functions in the pathway bacterial outer membrane biogenesis; lipopolysaccharide biosynthesis. The polypeptide is 2-dehydro-3-deoxyphosphooctonate aldolase 2 (kdsA2) (Pseudomonas putida (strain ATCC 47054 / DSM 6125 / CFBP 8728 / NCIMB 11950 / KT2440)).